Consider the following 512-residue polypeptide: Choline-sulfatase (512 aa).

Asp-14, Gln-15, and Cys-54 together coordinate Ca(2+). The Nucleophile role is filled by Cys-54. At Cys-54 the chain carries 3-oxoalanine (Cys). His-104 is an active-site residue. Ca(2+)-binding residues include Asp-296 and His-297.

This sequence belongs to the sulfatase family. Ca(2+) serves as cofactor. The conversion to 3-oxoalanine (also known as C-formylglycine, FGly), of a serine or cysteine residue in prokaryotes and of a cysteine residue in eukaryotes, is critical for catalytic activity.

It catalyses the reaction choline sulfate + H2O = choline + sulfate + H(+). The protein operates within amine and polyamine biosynthesis; choline biosynthesis; choline from choline sulfate: step 1/1. Converts choline-O-sulfate into choline. The polypeptide is Choline-sulfatase (betC) (Rhizobium meliloti (strain 1021) (Ensifer meliloti)).